The sequence spans 261 residues: Cytochrome c oxidase subunit 3 (261 aa).

The Mitochondrial matrix segment spans residues 1–15 (MTHQTHAYHMVNPSP). The chain crosses the membrane as a helical span at residues 16–34 (WPLTGALSALLMTSGLAMW). At 35–40 (FHYNLT) the chain is on the mitochondrial intermembrane side. The chain crosses the membrane as a helical span at residues 41 to 66 (LLLTLGMTTNLLTMYQWWRDIIREST). Over 67–72 (FQGHHT) the chain is Mitochondrial matrix. Residues 73–105 (PIVQKGLRYGMILFIISEVFFFAGFFWAFYHSS) form a helical membrane-spanning segment. Over 106–128 (LAPTPELGGCWPPTGIIPLNPLE) the chain is Mitochondrial intermembrane. Residues 129-152 (VPLLNTSVLLASGVSITWAHHSLM) traverse the membrane as a helical segment. The Mitochondrial matrix segment spans residues 153 to 155 (EGN). Residues 156 to 183 (RKHMLQALFITISLGVYFTLLQASEYYE) traverse the membrane as a helical segment. The Mitochondrial intermembrane segment spans residues 184-190 (TSFTISD). Residues 191–223 (GVYGSTFFMATGFHGLHVIIGSTFLIVCFLRQL) form a helical membrane-spanning segment. Over 224-232 (KYHFTSNHH) the chain is Mitochondrial matrix. A helical transmembrane segment spans residues 233-256 (FGFEAAAWYWHFVDVVWLFLYVSI). At 257-261 (YWWGS) the chain is on the mitochondrial intermembrane side.

The protein belongs to the cytochrome c oxidase subunit 3 family. In terms of assembly, component of the cytochrome c oxidase (complex IV, CIV), a multisubunit enzyme composed of 14 subunits. The complex is composed of a catalytic core of 3 subunits MT-CO1, MT-CO2 and MT-CO3, encoded in the mitochondrial DNA, and 11 supernumerary subunits COX4I, COX5A, COX5B, COX6A, COX6B, COX6C, COX7A, COX7B, COX7C, COX8 and NDUFA4, which are encoded in the nuclear genome. The complex exists as a monomer or a dimer and forms supercomplexes (SCs) in the inner mitochondrial membrane with NADH-ubiquinone oxidoreductase (complex I, CI) and ubiquinol-cytochrome c oxidoreductase (cytochrome b-c1 complex, complex III, CIII), resulting in different assemblies (supercomplex SCI(1)III(2)IV(1) and megacomplex MCI(2)III(2)IV(2)).

It is found in the mitochondrion inner membrane. It carries out the reaction 4 Fe(II)-[cytochrome c] + O2 + 8 H(+)(in) = 4 Fe(III)-[cytochrome c] + 2 H2O + 4 H(+)(out). In terms of biological role, component of the cytochrome c oxidase, the last enzyme in the mitochondrial electron transport chain which drives oxidative phosphorylation. The respiratory chain contains 3 multisubunit complexes succinate dehydrogenase (complex II, CII), ubiquinol-cytochrome c oxidoreductase (cytochrome b-c1 complex, complex III, CIII) and cytochrome c oxidase (complex IV, CIV), that cooperate to transfer electrons derived from NADH and succinate to molecular oxygen, creating an electrochemical gradient over the inner membrane that drives transmembrane transport and the ATP synthase. Cytochrome c oxidase is the component of the respiratory chain that catalyzes the reduction of oxygen to water. Electrons originating from reduced cytochrome c in the intermembrane space (IMS) are transferred via the dinuclear copper A center (CU(A)) of subunit 2 and heme A of subunit 1 to the active site in subunit 1, a binuclear center (BNC) formed by heme A3 and copper B (CU(B)). The BNC reduces molecular oxygen to 2 water molecules using 4 electrons from cytochrome c in the IMS and 4 protons from the mitochondrial matrix. This is Cytochrome c oxidase subunit 3 (MT-CO3) from Felis catus (Cat).